Consider the following 100-residue polypeptide: MTPWYLYLIRTADNALYTGITTDVARRYRQHQTGKGAKALRGKGELTLAFAAQVGDRSLALRIEYRIKQLTKRQKERLVTEREAFEALLSSLQTPVLKND.

A GIY-YIG domain is found at 2-77; the sequence is TPWYLYLIRT…KQLTKRQKER (76 aa).

It belongs to the UPF0213 family.

In Salmonella choleraesuis (strain SC-B67), this protein is UPF0213 protein YhbQ.